Here is an 822-residue protein sequence, read N- to C-terminus: Probable phosphoketolase (822 aa).

The protein belongs to the XFP family. Thiamine diphosphate is required as a cofactor.

In Nocardia farcinica (strain IFM 10152), this protein is Probable phosphoketolase.